A 104-amino-acid polypeptide reads, in one-letter code: MSSTLDTQHDVVVEKQPARTAPPPMYQVVLLNDDYTPMEFVVKVLQKFFGKNSEDATRIMLQVHHEGRAVCGVYPRDLAATRIAQVSQYARARQHPLQCIMEPA.

It belongs to the ClpS family. In terms of assembly, binds to the N-terminal domain of the chaperone ClpA.

Functionally, involved in the modulation of the specificity of the ClpAP-mediated ATP-dependent protein degradation. In Bordetella bronchiseptica (strain ATCC BAA-588 / NCTC 13252 / RB50) (Alcaligenes bronchisepticus), this protein is ATP-dependent Clp protease adapter protein ClpS.